Here is a 106-residue protein sequence, read N- to C-terminus: Neisseria hypothetical transcription factor (106 aa).

The HTH cro/C1-type domain occupies 26 to 80 (MRLFRVNKGWSQEELARQCGLDRTYVSAVERKRWNIALSNIEKMAAALGVAAYQL). A DNA-binding region (H-T-H motif) is located at residues 37–56 (QEELARQCGLDRTYVSAVER).

Homodimer. Can interact with the dimeric form of the DNA mimic protein DMP19 with 1:1 stoichiometry.

The protein resides in the cytoplasm. Its activity is regulated as follows. Repressor activity is inhibited in the presence of the DNA mimic protein DMP19, which interacts with NHTF and prevents binding of NHTF to its DNA-binding sites. Transcriptional regulator probably involved in the response to nitrogen levels. Down-regulates its own expression as well as the expression of the downstream gene, glnD, which encodes the [Protein-PII] uridylyltransferase, a key enzyme in the nitrogen regulation system. Acts by binding to a specific palindromic DNA sequence (5'-TGTNANTNACA-3') in its 5'-untranslated region. This Neisseria meningitidis serogroup B (strain ATCC BAA-335 / MC58) protein is Neisseria hypothetical transcription factor.